The primary structure comprises 200 residues: Recombination protein RecR (200 aa).

The segment at 60–75 adopts a C4-type zinc-finger fold; sequence CVYCQALTEDDVCNIC. A Toprim domain is found at 83-177; that stretch reads TKLCIIESML…KISRIGFGVP (95 aa).

The protein belongs to the RecR family.

Its function is as follows. May play a role in DNA repair. It seems to be involved in an RecBC-independent recombinational process of DNA repair. It may act with RecF and RecO. The chain is Recombination protein RecR from Francisella tularensis subsp. novicida (strain U112).